A 99-amino-acid polypeptide reads, in one-letter code: Small ribosomal subunit protein eS24 (99 aa).

Belongs to the eukaryotic ribosomal protein eS24 family.

This is Small ribosomal subunit protein eS24 from Pyrococcus abyssi (strain GE5 / Orsay).